The sequence spans 454 residues: Bifunctional protein GlmU (454 aa).

Positions 1 to 232 (MTDRTCLSIV…VDNVIGINNR (232 aa)) are pyrophosphorylase. UDP-N-acetyl-alpha-D-glucosamine-binding positions include 11–14 (LAAG), Lys25, Gln78, and 83–84 (GT). Asp108 is a Mg(2+) binding site. Residues Gly144, Glu158, Asn173, and Asn230 each contribute to the UDP-N-acetyl-alpha-D-glucosamine site. Asn230 lines the Mg(2+) pocket. Residues 233–253 (VELAEAEAIWQQRKRREMMLA) form a linker region. The tract at residues 254 to 454 (GVTLIAPETV…AIKAAKTATK (201 aa)) is N-acetyltransferase. 2 residues coordinate UDP-N-acetyl-alpha-D-glucosamine: Arg319 and Lys337. Residue His349 is the Proton acceptor of the active site. Residues Tyr352 and Asn363 each coordinate UDP-N-acetyl-alpha-D-glucosamine. Residues Ala366, 372-373 (NY), Ser391, Ser409, and Arg426 each bind acetyl-CoA.

It in the N-terminal section; belongs to the N-acetylglucosamine-1-phosphate uridyltransferase family. In the C-terminal section; belongs to the transferase hexapeptide repeat family. As to quaternary structure, homotrimer. Requires Mg(2+) as cofactor.

It localises to the cytoplasm. The catalysed reaction is alpha-D-glucosamine 1-phosphate + acetyl-CoA = N-acetyl-alpha-D-glucosamine 1-phosphate + CoA + H(+). The enzyme catalyses N-acetyl-alpha-D-glucosamine 1-phosphate + UTP + H(+) = UDP-N-acetyl-alpha-D-glucosamine + diphosphate. It functions in the pathway nucleotide-sugar biosynthesis; UDP-N-acetyl-alpha-D-glucosamine biosynthesis; N-acetyl-alpha-D-glucosamine 1-phosphate from alpha-D-glucosamine 6-phosphate (route II): step 2/2. The protein operates within nucleotide-sugar biosynthesis; UDP-N-acetyl-alpha-D-glucosamine biosynthesis; UDP-N-acetyl-alpha-D-glucosamine from N-acetyl-alpha-D-glucosamine 1-phosphate: step 1/1. It participates in bacterial outer membrane biogenesis; LPS lipid A biosynthesis. Catalyzes the last two sequential reactions in the de novo biosynthetic pathway for UDP-N-acetylglucosamine (UDP-GlcNAc). The C-terminal domain catalyzes the transfer of acetyl group from acetyl coenzyme A to glucosamine-1-phosphate (GlcN-1-P) to produce N-acetylglucosamine-1-phosphate (GlcNAc-1-P), which is converted into UDP-GlcNAc by the transfer of uridine 5-monophosphate (from uridine 5-triphosphate), a reaction catalyzed by the N-terminal domain. This chain is Bifunctional protein GlmU, found in Brucella anthropi (strain ATCC 49188 / DSM 6882 / CCUG 24695 / JCM 21032 / LMG 3331 / NBRC 15819 / NCTC 12168 / Alc 37) (Ochrobactrum anthropi).